We begin with the raw amino-acid sequence, 240 residues long: Peptidyl-tRNA hydrolase (240 aa).

Y14 is a binding site for tRNA. The active-site Proton acceptor is the H19. 3 residues coordinate tRNA: Y64, N66, and N112. Residues 190-204 (KADEEKPRKDSEKKP) are compositionally biased toward basic and acidic residues. The disordered stretch occupies residues 190 to 240 (KADEEKPRKDSEKKPAGQSHIRQARNNNQPKLPATGPMADMLKKMFGNKGE). Residues 209-219 (HIRQARNNNQP) are compositionally biased toward polar residues.

The protein belongs to the PTH family. Monomer.

Its subcellular location is the cytoplasm. The catalysed reaction is an N-acyl-L-alpha-aminoacyl-tRNA + H2O = an N-acyl-L-amino acid + a tRNA + H(+). Functionally, hydrolyzes ribosome-free peptidyl-tRNAs (with 1 or more amino acids incorporated), which drop off the ribosome during protein synthesis, or as a result of ribosome stalling. Catalyzes the release of premature peptidyl moieties from peptidyl-tRNA molecules trapped in stalled 50S ribosomal subunits, and thus maintains levels of free tRNAs and 50S ribosomes. The polypeptide is Peptidyl-tRNA hydrolase (Rhizobium etli (strain ATCC 51251 / DSM 11541 / JCM 21823 / NBRC 15573 / CFN 42)).